Reading from the N-terminus, the 716-residue chain is MDKMNPPALGQASALFPDLEPPGGVGKATVLLGGSTGLTSSDMEFQKMLIDERMRCENHKTNYQTLKVEHTRLQDQYTRAQNELKRLLSDRQVTQEKQQLLLAELRGELLDKTRDLEELKLQVLTPQRLELLRAQVQQELEAPIRERFNKLQEEAENYRSEYNKLRYDLTFLKSEFDHQKEEHARVLEERRIRHEADVARLEHDKEDLATQLQSGDPARDGKRVEALLREKAQLHQRLRGLEAEVTELRAERNNSGAQAENVQRIQIRQLAESQAAVKALEAEKQSIRMQLDRTESELRLSQEQNTLLTGKLHKAEREINSLNSQVEEMKHTHKLELSNVKLECVRSKGELERERDMLQCQVEGLQSDIEVMKSALERNKELISEKEREMVRRVQAAREEEIHKMATLQEEKLELENRLSELEQQKALQEVTGNSQKEEWEERLRAAQLGEESVRKELQNLRTKVQQQGQQLEELETLKAENADLRQQIAELNLQVGTLSHSESELLDTNNRLRESLERVREDLRSARTQMERTQQEAERLVEERRVEWLEEKHKLQDIEAELREKYSQAKERLQRAAFAQKKRKTMTELKENKLKDKIQLLEAKIAELEIEAKHAQLSKRLRELQRRHNEFRRLLLGNQMTSSTPLAQSLLIPNESIFSNIQVSEEQHQRELCVLRRRLEELENSQQQQLEELAAPLDRDRERLSSPRDALPDLS.

Positions 1 to 20 (MDKMNPPALGQASALFPDLE) are disordered. Positions 55–638 (RCENHKTNYQ…HNEFRRLLLG (584 aa)) form a coiled coil. The interval 691–716 (LEELAAPLDRDRERLSSPRDALPDLS) is disordered. Basic and acidic residues predominate over residues 698–707 (LDRDRERLSS).

The protein belongs to the CEP83 family.

The protein localises to the cytoplasm. It localises to the cytoskeleton. It is found in the microtubule organizing center. The protein resides in the centrosome. Its subcellular location is the centriole. In terms of biological role, component of the distal appendage region of the centriole involved in the initiation of primary cilium assembly. The sequence is that of Centrosomal protein of 83 kDa (cep83) from Danio rerio (Zebrafish).